An 84-amino-acid chain; its full sequence is ATP synthase subunit c (84 aa).

The next 2 helical transmembrane spans lie at 9-29 and 54-74; these read IFGS…GFSL and IVAG…LLFI.

It belongs to the ATPase C chain family. In terms of assembly, F-type ATPases have 2 components, F(1) - the catalytic core - and F(0) - the membrane proton channel. F(1) has five subunits: alpha(3), beta(3), gamma(1), delta(1), epsilon(1). F(0) has three main subunits: a(1), b(2) and c(10-14). The alpha and beta chains form an alternating ring which encloses part of the gamma chain. F(1) is attached to F(0) by a central stalk formed by the gamma and epsilon chains, while a peripheral stalk is formed by the delta and b chains.

The protein localises to the cell inner membrane. Its function is as follows. F(1)F(0) ATP synthase produces ATP from ADP in the presence of a proton or sodium gradient. F-type ATPases consist of two structural domains, F(1) containing the extramembraneous catalytic core and F(0) containing the membrane proton channel, linked together by a central stalk and a peripheral stalk. During catalysis, ATP synthesis in the catalytic domain of F(1) is coupled via a rotary mechanism of the central stalk subunits to proton translocation. Key component of the F(0) channel; it plays a direct role in translocation across the membrane. A homomeric c-ring of between 10-14 subunits forms the central stalk rotor element with the F(1) delta and epsilon subunits. This Histophilus somni (strain 2336) (Haemophilus somnus) protein is ATP synthase subunit c.